The chain runs to 346 residues: Histidinol-phosphate aminotransferase (346 aa).

At K209 the chain carries N6-(pyridoxal phosphate)lysine.

The protein belongs to the class-II pyridoxal-phosphate-dependent aminotransferase family. Histidinol-phosphate aminotransferase subfamily. In terms of assembly, homodimer. Requires pyridoxal 5'-phosphate as cofactor.

It carries out the reaction L-histidinol phosphate + 2-oxoglutarate = 3-(imidazol-4-yl)-2-oxopropyl phosphate + L-glutamate. It functions in the pathway amino-acid biosynthesis; L-histidine biosynthesis; L-histidine from 5-phospho-alpha-D-ribose 1-diphosphate: step 7/9. The sequence is that of Histidinol-phosphate aminotransferase from Aliivibrio fischeri (strain ATCC 700601 / ES114) (Vibrio fischeri).